The sequence spans 668 residues: DNA-directed RNA polymerase subunit beta' (668 aa).

Residues C71, C73, C91, and C94 each contribute to the Zn(2+) site. The Mg(2+) site is built by D505, D507, and D509.

It belongs to the RNA polymerase beta' chain family. RpoC1 subfamily. In plastids the minimal PEP RNA polymerase catalytic core is composed of four subunits: alpha, beta, beta', and beta''. When a (nuclear-encoded) sigma factor is associated with the core the holoenzyme is formed, which can initiate transcription. The cofactor is Mg(2+). Requires Zn(2+) as cofactor.

It localises to the plastid. The protein resides in the chloroplast. It carries out the reaction RNA(n) + a ribonucleoside 5'-triphosphate = RNA(n+1) + diphosphate. Functionally, DNA-dependent RNA polymerase catalyzes the transcription of DNA into RNA using the four ribonucleoside triphosphates as substrates. In Mesostigma viride (Green alga), this protein is DNA-directed RNA polymerase subunit beta'.